The primary structure comprises 811 residues: Protein VAC14 homolog (811 aa).

HEAT repeat units follow at residues 81 to 119, 122 to 160, 240 to 278, 334 to 372, 375 to 412, 431 to 469, and 472 to 510; these read DSYMESILLPVLYCFNDSDSKIRYYACESMYNIGKVAKG, FRYFNLIFDVLCKLFADTEITVKNGAELLDRLIKDIVMQ, ISYLPFLLDGLMNYLSDPNESIRIVTSNCLYDFLREIQK, QIDYKRILEIIIDHLGSSVPLIQEKALKWLFEFIYIAPK, LLQIPKVLENLLPLMSNDENMRQSAKDLSQNLVILVSK, SVDFRSLIEVLQKLLSNDNEETRLCALEWVLLLQRRTGG, and INMHDPIFQTLLLQLSDPSDLVVSRTLELLAHIAISHKS. A compositionally biased stretch (low complexity) spans 775-785; that stretch reads TSASGITTTAS. Positions 775-811 are disordered; sequence TSASGITTTASNSRDSFITRLPPTAALSTGARKKPKQ.

It belongs to the VAC14 family. In terms of assembly, component of the PI(3,5)P2 regulatory complex, composed of ATG18, FIG4, FAB1, VAC14 and VAC7. VAC14 nucleates the assembly of the complex and serves as a scaffold.

The protein localises to the cytoplasm. It is found in the vacuole membrane. In terms of biological role, the PI(3,5)P2 regulatory complex regulates both the synthesis and turnover of phosphatidylinositol 3,5-bisphosphate (PtdIns(3,5)P2). Regulates the synthesis of PtdIns(3,5)P2 by positive activation of FAB1 and by controlling FIG4 localization. In Schizosaccharomyces pombe (strain 972 / ATCC 24843) (Fission yeast), this protein is Protein VAC14 homolog.